A 70-amino-acid chain; its full sequence is Conotoxin Cal6.11 (70 aa).

Residues 1–22 (MKLTCVLIIAVLILTACQFIAA) form the signal peptide. Residues 23-43 (DNTEYRKWRRSGTSTGMRLGS) constitute a propeptide that is removed on maturation. 3 disulfides stabilise this stretch: C46/C57, C50/C62, and C56/C69. Residues P48 and P58 each carry the 4-hydroxyproline modification. E60 and E67 each carry 4-carboxyglutamate.

The protein belongs to the conotoxin O1 superfamily. As to expression, expressed by the venom duct.

It is found in the secreted. Functionally, probable neurotoxin with unknown target. Possibly targets ion channels. The polypeptide is Conotoxin Cal6.11 (Californiconus californicus (California cone)).